The chain runs to 83 residues: Large ribosomal subunit protein eL31 (83 aa).

The protein belongs to the eukaryotic ribosomal protein eL31 family.

The sequence is that of Large ribosomal subunit protein eL31 from Methanococcus maripaludis (strain DSM 14266 / JCM 13030 / NBRC 101832 / S2 / LL).